Here is a 2471-residue protein sequence, read N- to C-terminus: Probable polyketide synthase 24 (2471 aa).

Residues 21–449 (ENLVAIVGVG…GSNCCLVLSQ (429 aa)) enclose the Ketosynthase family 3 (KS3) domain. Active-site for beta-ketoacyl synthase activity residues include cysteine 190, histidine 332, and histidine 372. The acyl/malonyl transferase stretch occupies residues 654 to 687 (GIKASFMLGHSLGEVTTAYCSGMIDIDQLCYLIY). Serine 664 acts as the For acyl/malonyl transferase activity in catalysis. The tract at residues 953 to 1075 (ISILGNSMQD…SNFHLNSNDN (123 aa)) is N-terminal hotdog fold. The region spanning 953 to 1245 (ISILGNSMQD…VKSLTPVKDP (293 aa)) is the PKS/mFAS DH domain. Catalysis depends on histidine 987, which acts as the Proton acceptor; for dehydratase activity. Residues 1094-1245 (NLSSIPWDEF…VKSLTPVKDP (152 aa)) form a C-terminal hotdog fold region. Aspartate 1157 serves as the catalytic Proton donor; for dehydratase activity. Residues 1426-1469 (IINEQQQQQQQQQQQQQQQQQQQQQLLNNENNKESLKNLLVNCN) are a coiled coil. Residues 2336–2413 (SSSTNVKNKF…MVYQIINDSL (78 aa)) form the Carrier domain. Serine 2373 bears the O-(pantetheine 4'-phosphoryl)serine mark.

The cofactor is pantetheine 4'-phosphate.

Functionally, probable polyketide synthase. This is Probable polyketide synthase 24 (pks24) from Dictyostelium discoideum (Social amoeba).